The following is a 344-amino-acid chain: Dihydroorotase (344 aa).

The Zn(2+) site is built by H13 and H15. Residues 15–17 and N41 contribute to the substrate site; that span reads HFR. Residues K98, H135, and H173 each contribute to the Zn(2+) site. K98 is modified (N6-carboxylysine). Position 135 (H135) interacts with substrate. L218 contacts substrate. Residue D246 participates in Zn(2+) binding. The active site involves D246. Residues H250 and A262 each coordinate substrate.

The protein belongs to the metallo-dependent hydrolases superfamily. DHOase family. Class II DHOase subfamily. Homodimer. The cofactor is Zn(2+).

It carries out the reaction (S)-dihydroorotate + H2O = N-carbamoyl-L-aspartate + H(+). It participates in pyrimidine metabolism; UMP biosynthesis via de novo pathway; (S)-dihydroorotate from bicarbonate: step 3/3. Catalyzes the reversible cyclization of carbamoyl aspartate to dihydroorotate. This Shewanella sediminis (strain HAW-EB3) protein is Dihydroorotase.